A 1206-amino-acid polypeptide reads, in one-letter code: Cilia- and flagella-associated protein 157 (1206 aa).

Disordered regions lie at residues 26–52 (GGGGGSAAAAAMQEEQGEQEGPTGRDL), 79–109 (RAEQEHPQEGRPQQQEQGGEARQEQQGQQAP), 125–173 (EATC…RGPL), and 327–405 (GSGK…EEDW). 3 stretches are compositionally biased toward low complexity: residues 88–109 (GRPQQQEQGGEARQEQQGQQAP), 156–173 (AKAVARGPRGAGTARGPL), and 385–397 (QQLGEQPGEQPGG). Coiled coils occupy residues 634 to 732 (TDEL…KTKD), 799 to 833 (TEKLLNKNNKLMEENAELRRQLELSKQTEEELARR), and 876 to 903 (LHLAQLQLEEKSAEADALRERLESKTAE). Disordered stretches follow at residues 936–990 (TTTN…DELS), 1011–1072 (LSHG…GATS), and 1168–1206 (PWGKRSEQQPLTTTKHSGTFLRKGNGPSNNTGSRGSLKV). Composition is skewed to low complexity over residues 951 to 973 (AGADAAGGSRSGSPTPPGASSSA) and 1014 to 1035 (GPLSQSSPAPLSAGGMGSALAG). Composition is skewed to gly residues over residues 1037 to 1046 (WGPGSPGGSR) and 1058 to 1067 (SAGGMGGPQG). Polar residues-rich tracts occupy residues 1175–1184 (QQPLTTTKHS) and 1193–1206 (GPSNNTGSRGSLKV).

Belongs to the CFAP157 family.

It localises to the cell projection. The protein resides in the cilium. The protein localises to the flagellum. This is Cilia- and flagella-associated protein 157 from Chlamydomonas reinhardtii (Chlamydomonas smithii).